Consider the following 146-residue polypeptide: Mu-like prophage FluMu G protein 1 (146 aa).

It to phage Mu protein G.

The sequence is that of Mu-like prophage FluMu G protein 1 from Haemophilus influenzae (strain ATCC 51907 / DSM 11121 / KW20 / Rd).